Consider the following 115-residue polypeptide: MPIRIFSKEGLRERGASGKNEQKKKKKEKIRRSMKNLCRFVESYKDFTLYGYRFHSKIKHKFCVLSSSFPVLFFCHPLSPLKSNFIDRFTLDSHASQATWTLYMVVIVLFLSYRN.

The segment at 9–30 (EGLRERGASGKNEQKKKKKEKI) is disordered.

This is an uncharacterized protein from Saccharomyces cerevisiae (strain ATCC 204508 / S288c) (Baker's yeast).